Here is a 962-residue protein sequence, read N- to C-terminus: Glycine dehydrogenase (decarboxylating) (962 aa).

An N6-(pyridoxal phosphate)lysine modification is found at Lys709.

It belongs to the GcvP family. In terms of assembly, the glycine cleavage system is composed of four proteins: P, T, L and H. Requires pyridoxal 5'-phosphate as cofactor.

It catalyses the reaction N(6)-[(R)-lipoyl]-L-lysyl-[glycine-cleavage complex H protein] + glycine + H(+) = N(6)-[(R)-S(8)-aminomethyldihydrolipoyl]-L-lysyl-[glycine-cleavage complex H protein] + CO2. The glycine cleavage system catalyzes the degradation of glycine. The P protein binds the alpha-amino group of glycine through its pyridoxal phosphate cofactor; CO(2) is released and the remaining methylamine moiety is then transferred to the lipoamide cofactor of the H protein. This Shewanella baltica (strain OS223) protein is Glycine dehydrogenase (decarboxylating).